The primary structure comprises 422 residues: GTPase Obg (422 aa).

The Obg domain occupies 4–161; that stretch reads LHFVDEAFNE…FKIKTELKVL (158 aa). The OBG-type G domain maps to 162-327; the sequence is ADIGLLGFPS…LKYEMSSLLQ (166 aa). GTP-binding positions include 168–175, 193–197, 214–217, 281–284, and 308–310; these read GFPSVGKS, FTTIK, DLPG, NKMD, and SLV. Positions 175 and 195 each coordinate Mg(2+). Positions 345 to 422 constitute an OCT domain; sequence TLPDNQNTIS…KICDRLFYFL (78 aa).

It belongs to the TRAFAC class OBG-HflX-like GTPase superfamily. OBG GTPase family. In terms of assembly, monomer. The cofactor is Mg(2+).

Its subcellular location is the cytoplasm. An essential GTPase which binds GTP, GDP and possibly (p)ppGpp with moderate affinity, with high nucleotide exchange rates and a fairly low GTP hydrolysis rate. Plays a role in control of the cell cycle, stress response, ribosome biogenesis and in those bacteria that undergo differentiation, in morphogenesis control. This is GTPase Obg from Onion yellows phytoplasma (strain OY-M).